The following is a 171-amino-acid chain: Der GTPase-activating protein YihI (171 aa).

Disordered regions lie at residues 1 to 99 and 145 to 171; these read MKKP…QAEL and LSYD…RGGN. Basic and acidic residues predominate over residues 20 to 30; it reads TREELNQEARD. Over residues 31–40 the composition is skewed to basic residues; sequence RKRLKKHRGH. A compositionally biased stretch (acidic residues) spans 147–160; that stretch reads YDDDDEDDEEDEKQ.

This sequence belongs to the YihI family. As to quaternary structure, interacts with Der.

In terms of biological role, a GTPase-activating protein (GAP) that modifies Der/EngA GTPase function. May play a role in ribosome biogenesis. This is Der GTPase-activating protein YihI from Salmonella choleraesuis (strain SC-B67).